The chain runs to 112 residues: uncharacterized protein (112 aa).

A disordered region spans residues 1–27 (MIASIGDSAEPPLRRTRRAQQQDRPPT).

This is an uncharacterized protein from Orgyia pseudotsugata multicapsid polyhedrosis virus (OpMNPV).